We begin with the raw amino-acid sequence, 514 residues long: 23S rRNA (uracil(1939)-C(5))-methyltransferase RlmD (514 aa).

[4Fe-4S] cluster is bound by residues Cys-70, Cys-76, Cys-79, and Cys-158. The S-adenosyl-L-methionine site is built by Gln-272, Phe-301, Asn-306, Glu-322, Asn-350, and Asp-371. Residue Cys-398 is the Nucleophile of the active site.

The protein belongs to the class I-like SAM-binding methyltransferase superfamily. RNA M5U methyltransferase family. RlmD subfamily.

The enzyme catalyses uridine(1939) in 23S rRNA + S-adenosyl-L-methionine = 5-methyluridine(1939) in 23S rRNA + S-adenosyl-L-homocysteine + H(+). Its function is as follows. Catalyzes the formation of 5-methyl-uridine at position 1939 (m5U1939) in 23S rRNA. The protein is 23S rRNA (uracil(1939)-C(5))-methyltransferase RlmD of Chromobacterium violaceum (strain ATCC 12472 / DSM 30191 / JCM 1249 / CCUG 213 / NBRC 12614 / NCIMB 9131 / NCTC 9757 / MK).